The sequence spans 299 residues: NAD kinase (299 aa).

Catalysis depends on Asp71, which acts as the Proton acceptor. Residues 71-72 (DG), 145-146 (ND), Arg173, Asp175, 186-191 (TAYSLS), Ala210, and Gln248 contribute to the NAD(+) site.

It belongs to the NAD kinase family. Requires a divalent metal cation as cofactor.

The protein resides in the cytoplasm. It carries out the reaction NAD(+) + ATP = ADP + NADP(+) + H(+). Functionally, involved in the regulation of the intracellular balance of NAD and NADP, and is a key enzyme in the biosynthesis of NADP. Catalyzes specifically the phosphorylation on 2'-hydroxyl of the adenosine moiety of NAD to yield NADP. The sequence is that of NAD kinase from Bordetella bronchiseptica (strain ATCC BAA-588 / NCTC 13252 / RB50) (Alcaligenes bronchisepticus).